A 309-amino-acid chain; its full sequence is UDP-N-acetylenolpyruvoylglucosamine reductase (309 aa).

The region spanning 24–187 is the FAD-binding PCMH-type domain; that stretch reads RVGGPADWLF…TKAVFEAPRG (164 aa). Arg-167 is a catalytic residue. Basic and acidic residues predominate over residues 200–213; the sequence is LARRDATQPTKERS. The tract at residues 200–230 is disordered; that stretch reads LARRDATQPTKERSAGSTFRNPAGFSSTGRS. The span at 214 to 228 shows a compositional bias: polar residues; it reads AGSTFRNPAGFSSTG. The active-site Proton donor is Ser-216. Glu-298 is a catalytic residue.

It belongs to the MurB family. FAD is required as a cofactor.

The protein localises to the cytoplasm. It carries out the reaction UDP-N-acetyl-alpha-D-muramate + NADP(+) = UDP-N-acetyl-3-O-(1-carboxyvinyl)-alpha-D-glucosamine + NADPH + H(+). It functions in the pathway cell wall biogenesis; peptidoglycan biosynthesis. Its function is as follows. Cell wall formation. The polypeptide is UDP-N-acetylenolpyruvoylglucosamine reductase (Roseobacter denitrificans (strain ATCC 33942 / OCh 114) (Erythrobacter sp. (strain OCh 114))).